A 338-amino-acid chain; its full sequence is Homeobox protein ceh-20 (338 aa).

One can recognise a PBC domain in the interval 4–187; that stretch reads THPANLSELL…VMILRSRFLD (184 aa). The tract at residues 11 to 91 is PBC-A; it reads ELLDAVLKIN…EGVAGPDKGG (81 aa). The tract at residues 94–187 is PBC-B; the sequence is GSDASGGDQA…VMILRSRFLD (94 aa). Positions 188 to 250 form a DNA-binding region, homeobox; TALE-type; the sequence is ARRKRRNFSK…NKRIRYKKNM (63 aa).

Belongs to the TALE/PBX homeobox family. In terms of assembly, interacts with Meis protein psa-3. Interacts with homeobox protein nob-1. In terms of tissue distribution, expressed in head dopaminergic neurons.

The protein resides in the nucleus. Transcription factor that binds to the 5'-TGATNNAT(G/T)(G/A)-3' PBC/Hox lineage enhancer region of sem-2 to promote cell fate specification in the postembryonic mesoderm (also known as the M lineage). Required for the M lineage-specific expression of the transcription factor, mls-2. Required for asymmetric division of the T hypodermal cell, probably acting via the regulation of asymmetric expression of Meis protein psa-3 in concert with homeobox protein nob-1 and the Wnt-MAPK pathway. Has a role in the mig-13 pathway to promote the guidance, migration and positioning of Q neuroblasts and their descendants along the anteroposterior body axis and the anterior migration of BDU interneurons. Also required for normal vulval formation. Plays a role in regulating gene expression in dopaminergic neurons, acting in midbody PDE neurons, and acting redundantly with ceh-40 in head neurons. May activate dopamine pathway genes in concert with ETS domain-containing protein ast-1, and homeobox proteins ceh-43 and ceh-40. This is Homeobox protein ceh-20 from Caenorhabditis elegans.